The sequence spans 301 residues: Phosphatidylglycerol--prolipoprotein diacylglyceryl transferase (301 aa).

Transmembrane regions (helical) follow at residues 10–30 (IAFSLGPVKVHWYGLMYLAGF), 57–77 (LLFYAMMGVVLGGRVGYMLFY), 92–112 (VWEGGMSFHGGLIGVLLAVAW), and 119–139 (MHMFDVVDFCAPLVPVGLGFG). Arg-140 lines the a 1,2-diacyl-sn-glycero-3-phospho-(1'-sn-glycerol) pocket. 3 helical membrane passes run 202–222 (PSQLYEAFLEGLVMFIVLWLF), 230–250 (YAVSGLFALLYGVFRFLVEFV), and 264–284 (LTRGQILSLPLIVIGLFLFWL).

The protein belongs to the Lgt family.

Its subcellular location is the cell inner membrane. It catalyses the reaction L-cysteinyl-[prolipoprotein] + a 1,2-diacyl-sn-glycero-3-phospho-(1'-sn-glycerol) = an S-1,2-diacyl-sn-glyceryl-L-cysteinyl-[prolipoprotein] + sn-glycerol 1-phosphate + H(+). It participates in protein modification; lipoprotein biosynthesis (diacylglyceryl transfer). Functionally, catalyzes the transfer of the diacylglyceryl group from phosphatidylglycerol to the sulfhydryl group of the N-terminal cysteine of a prolipoprotein, the first step in the formation of mature lipoproteins. This Xylella fastidiosa (strain M12) protein is Phosphatidylglycerol--prolipoprotein diacylglyceryl transferase.